Consider the following 487-residue polypeptide: Betaine aldehyde dehydrogenase (487 aa).

Residues S26 and D93 each contribute to the K(+) site. Position 150–152 (150–152 (GAW)) interacts with NAD(+). The Charge relay system role is filled by K162. NAD(+)-binding positions include 176-179 (KPSE) and 229-232 (SVPT). L244 contributes to the K(+) binding site. The Proton acceptor role is filled by E250. Positions 252, 284, and 384 each coordinate NAD(+). Residue C284 is the Nucleophile of the active site. C284 carries the post-translational modification Cysteine sulfenic acid (-SOH). K(+)-binding residues include K454 and G457. The active-site Charge relay system is the E461.

The protein belongs to the aldehyde dehydrogenase family. As to quaternary structure, dimer of dimers. K(+) serves as cofactor.

It carries out the reaction betaine aldehyde + NAD(+) + H2O = glycine betaine + NADH + 2 H(+). It participates in amine and polyamine biosynthesis; betaine biosynthesis via choline pathway; betaine from betaine aldehyde: step 1/1. Functionally, involved in the biosynthesis of the osmoprotectant glycine betaine. Catalyzes the irreversible oxidation of betaine aldehyde to the corresponding acid. The sequence is that of Betaine aldehyde dehydrogenase from Rhizobium etli (strain ATCC 51251 / DSM 11541 / JCM 21823 / NBRC 15573 / CFN 42).